The chain runs to 669 residues: Hypoxia-inducible factor 3-alpha (669 aa).

The disordered stretch occupies residues 1-27; sequence MALGLQRARSTTELRKEKSRDAARSRR. Residues 10 to 27 show a composition bias toward basic and acidic residues; it reads STTELRKEKSRDAARSRR. The region spanning 14-67 is the bHLH domain; that stretch reads LRKEKSRDAARSRRSQETEVLYQLAHTLPFARGVSAHLDKASIMRLTISYLRMH. The segment at 77-100 is nuclear localization signal; the sequence is QVGAGGEPLDACYLKALEGFVMVL. PAS domains are found at residues 82–154 and 227–297; these read GEPL…LSRR and PHPG…LSKG. Positions 230–274 are nuclear export signal; the sequence is GSLEPPLGRGAFLSRHSLDMKFTYCDDRIAEVAGYSPDDLIGCSA. The interval 354–389 is disordered; that stretch reads EQTEQHSRRPIQRGAPSQKDTPNPGDSLDTPGPRIL. Residues 414-418 carry the LRRLL motif; the sequence is LRRLL. A compositionally biased stretch (polar residues) spans 430-444; it reads TPSTPLATRHPQSPL. A disordered region spans residues 430 to 451; it reads TPSTPLATRHPQSPLSADLPDE. The segment at 452–581 is ODD; it reads LPVGTENVHR…TLAQSSEDED (130 aa). The tract at residues 454 to 506 is NTAD; that stretch reads VGTENVHRLFTSGKDTEAVETDLDIAQDADALDLEMLAPYISMDDDFQLNASE. Lysine 467 is covalently cross-linked (Glycyl lysine isopeptide (Lys-Gly) (interchain with G-Cter in ubiquitin)). Positions 490–497 match the LAPYISMD motif; it reads LAPYISMD. 4-hydroxyproline is present on proline 492. 2 disordered regions span residues 523–600 and 619–669; these read RARS…SPEH and APGS…AQAD. Low complexity-rich tracts occupy residues 530 to 541 and 550 to 564; these read LSPPALEPSLLP and SCSS…ASSP. Lysine 570 participates in a covalent cross-link: Glycyl lysine isopeptide (Lys-Gly) (interchain with G-Cter in ubiquitin). Residues 629 to 646 show a composition bias toward low complexity; it reads PLLNLNEPLGLGPSLLSP.

As to quaternary structure, isoform 2 interacts (via ODD domain) with VHL (via beta domain). Isoform 4 interacts with HIF1A; the interaction inhibits the binding of HIF1A to hypoxia-responsive element (HRE) and HIF1A/ARNT-dependent transcriptional activation. Isoform 4 interacts with ARNT; the interaction occurs in a HIF1A- and DNA-binding-independent manner and does not induce HIF1A/ARNT-dependent transcriptional activation. Isoform 4 interacts with EPAS1. Interacts with BAD, BCL2L2 and MCL1. In normoxia, hydroxylated on Pro-492 in the oxygen-dependent degradation domain (ODD) by prolyl hydroxylase(s) (PHD). The hydroxylated proline promotes interaction with VHL, initiating rapid ubiquitination and subsequent proteasomal degradation. In terms of processing, ubiquitinated; ubiquitination occurs in a VHL- and oxygen-dependent pathway and subsequently targeted for proteasomal degradation. Expressed in vascular cells (at protein level). Expressed in kidney. Expressed in lung epithelial cells. Expressed in endothelial cells (venous and arterial cells from umbilical cord and aortic endothelial cells) and in vascular smooth muscle cells (aorta). Strongly expressed in the heart, placenta, and skeletal muscle, whereas a weak expression profile was found in the lung, liver, and kidney. Expressed weakly in cell renal cell carcinoma (CC-RCC) compared to normal renal cells. Expression is down-regulated in numerous kidney tumor cells compared to non tumor kidney tissues. Isoform 2 is expressed in heart, placenta, lung, liver, skeletal muscle and pancreas and in numerous cancer cell lines. Isoform 3 and isoform 4 are weakly expressed in heart, placenta, lung, liver, skeletal muscle and pancreas. Isoform 4 is expressed in fetal tissues, such as heart, brain, thymus, lung, liver, skeletal kidney and spleen. Isoform 3 is weakly expressed in fetal tissues, such as liver and kidney.

It is found in the nucleus. It localises to the cytoplasm. Its subcellular location is the nucleus speckle. The protein resides in the mitochondrion. In terms of biological role, acts as a transcriptional regulator in adaptive response to low oxygen tension. Acts as a regulator of hypoxia-inducible gene expression. Functions as an inhibitor of angiogenesis in hypoxic cells of the cornea. Plays a role in the development of the cardiorespiratory system. May also be involved in apoptosis. Functionally, attenuates the ability of transcription factor HIF1A to bind to hypoxia-responsive elements (HRE) located within the enhancer/promoter of hypoxia-inducible target genes and hence inhibits HRE-driven transcriptional activation. Also inhibits hypoxia-inducible ARNT-mediated gene expression. Its function is as follows. Attenuates the ability of transcription factor HIF1A to bind to hypoxia-responsive elements (HRE) located within the enhancer/promoter of hypoxia-inducible target genes and hence inhibits HRE-driven transcriptional activation. Attenuates the ability of transcription factor HIF1A and EPAS1/HIF2A to bind to hypoxia-responsive elements (HRE) located within the enhancer/promoter of hypoxia-inducible target genes and hence inhibits HRE-driven transcriptional activation. May act as a tumor suppressor and inhibits malignant cell transformation. This chain is Hypoxia-inducible factor 3-alpha, found in Homo sapiens (Human).